Here is a 541-residue protein sequence, read N- to C-terminus: Light-independent protochlorophyllide reductase subunit B (541 aa).

Position 36 (aspartate 36) interacts with [4Fe-4S] cluster. The active-site Proton donor is aspartate 287. Substrate is bound at residue 422-423 (GL).

This sequence belongs to the ChlB/BchB/BchZ family. In terms of assembly, protochlorophyllide reductase is composed of three subunits; BchL, BchN and BchB. Forms a heterotetramer of two BchB and two BchN subunits. [4Fe-4S] cluster serves as cofactor.

It carries out the reaction chlorophyllide a + oxidized 2[4Fe-4S]-[ferredoxin] + 2 ADP + 2 phosphate = protochlorophyllide a + reduced 2[4Fe-4S]-[ferredoxin] + 2 ATP + 2 H2O. It functions in the pathway porphyrin-containing compound metabolism; bacteriochlorophyll biosynthesis (light-independent). Its function is as follows. Component of the dark-operative protochlorophyllide reductase (DPOR) that uses Mg-ATP and reduced ferredoxin to reduce ring D of protochlorophyllide (Pchlide) to form chlorophyllide a (Chlide). This reaction is light-independent. The NB-protein (BchN-BchB) is the catalytic component of the complex. This chain is Light-independent protochlorophyllide reductase subunit B, found in Rhodopseudomonas palustris (strain HaA2).